Reading from the N-terminus, the 99-residue chain is Ferredoxin, heterocyst (99 aa).

The 2Fe-2S ferredoxin-type domain maps to 4-96 (YQVRLINKKQ…NCTIKTHQEP (93 aa)). 4 residues coordinate [2Fe-2S] cluster: Cys42, Cys47, Cys50, and Cys80.

The protein belongs to the 2Fe2S plant-type ferredoxin family. Requires [2Fe-2S] cluster as cofactor.

Ferredoxins are iron-sulfur proteins that transfer electrons in a wide variety of metabolic reactions. Donates electrons to the nitrogenase. This is Ferredoxin, heterocyst (fdxH) from Nostoc sp. (strain PCC 7120 / SAG 25.82 / UTEX 2576).